Consider the following 94-residue polypeptide: Beta-defensin 132 (94 aa).

An N-terminal signal peptide occupies residues 1 to 22 (MKFLLLVLAALGFLTQVIPASA). Cystine bridges form between cysteine 27-cysteine 55 and cysteine 39-cysteine 56. Residues 72–94 (GNHWQSRRNTQRKDKKQQTTVTS) are disordered. The span at 76 to 86 (QSRRNTQRKDK) shows a compositional bias: basic residues.

The protein belongs to the beta-defensin family.

The protein resides in the secreted. In terms of biological role, has antibacterial activity. In Gorilla gorilla gorilla (Western lowland gorilla), this protein is Beta-defensin 132 (DEFB132).